The following is a 3268-amino-acid chain: E3 ubiquitin-protein ligase TOM1 (3268 aa).

Ser-1890 is modified (phosphoserine). 2 disordered regions span residues Val-1941–Ala-2023 and Gly-2038–Ser-2083. Residues Phe-1942–Asp-1955 show a composition bias toward acidic residues. Positions Ser-1967–Asp-1976 are enriched in polar residues. Acidic residues-rich tracts occupy residues Thr-1978–Asp-1988, Asp-2042–Trp-2053, and Ser-2063–Pro-2074. A Phosphothreonine modification is found at Thr-2096. A phosphoserine mark is found at Ser-2119, Ser-2376, Ser-2406, and Ser-2418. Positions Asp-2416–Asn-2426 are enriched in acidic residues. The interval Asp-2416–Lys-2443 is disordered. In terms of domain architecture, HECT spans Thr-2932–Ala-3268. Residue Cys-3235 is the Glycyl thioester intermediate of the active site.

This sequence belongs to the UPL family. TOM1/PTR1 subfamily. As to quaternary structure, interacts with the ADA3/NGG1 subunit of the SAGA complex. Interacts with KRR1.

Its subcellular location is the nucleus. The protein localises to the nucleolus. The enzyme catalyses S-ubiquitinyl-[E2 ubiquitin-conjugating enzyme]-L-cysteine + [acceptor protein]-L-lysine = [E2 ubiquitin-conjugating enzyme]-L-cysteine + N(6)-ubiquitinyl-[acceptor protein]-L-lysine.. It participates in protein modification; protein ubiquitination. Probable ubiquitin ligase protein involved in many cellular processes, such as transcription regulation, maintenance of nuclear structure, cell cycle, mRNA export and rRNA maturation. E3 ubiquitin ligase proteins mediate ubiquitination and subsequent proteasomal degradation of target proteins. Involved in transcription regulation by interacting, and probably mediating, ubiquitination of some subunit of the SAGA complex. Required for SPT7 ubiquitination. Participates in mRNA export from the nucleus by regulating the transport of hnRNP proteins. Required for the shuttling of hnRNP protein NAB2, probably by mediating ubiquitination of a protein associated with NAB2. Also required for full induction of the general stress and heat-shock responses. Involved in 18S rRNA maturation by affecting several early steps in the rRNA processing pathway. This is E3 ubiquitin-protein ligase TOM1 (TOM1) from Saccharomyces cerevisiae (strain ATCC 204508 / S288c) (Baker's yeast).